The chain runs to 453 residues: Ribulose bisphosphate carboxylase large chain (453 aa).

Positions 1–2 are excised as a propeptide; the sequence is MS. Residue Pro3 is modified to N-acetylproline. Lys14 is modified (N6,N6,N6-trimethyllysine). Substrate contacts are provided by Asn123 and Thr173. Lys175 serves as the catalytic Proton acceptor. Lys177 contributes to the substrate binding site. The Mg(2+) site is built by Lys201, Asp203, and Glu204. An N6-carboxylysine modification is found at Lys201. His294 serves as the catalytic Proton acceptor. Arg295, His327, and Ser379 together coordinate substrate.

It belongs to the RuBisCO large chain family. Type I subfamily. As to quaternary structure, heterohexadecamer of 8 large chains and 8 small chains; disulfide-linked. The disulfide link is formed within the large subunit homodimers. It depends on Mg(2+) as a cofactor. Post-translationally, the disulfide bond which can form in the large chain dimeric partners within the hexadecamer appears to be associated with oxidative stress and protein turnover.

The protein localises to the plastid. It is found in the chloroplast. The catalysed reaction is 2 (2R)-3-phosphoglycerate + 2 H(+) = D-ribulose 1,5-bisphosphate + CO2 + H2O. It carries out the reaction D-ribulose 1,5-bisphosphate + O2 = 2-phosphoglycolate + (2R)-3-phosphoglycerate + 2 H(+). In terms of biological role, ruBisCO catalyzes two reactions: the carboxylation of D-ribulose 1,5-bisphosphate, the primary event in carbon dioxide fixation, as well as the oxidative fragmentation of the pentose substrate in the photorespiration process. Both reactions occur simultaneously and in competition at the same active site. The chain is Ribulose bisphosphate carboxylase large chain from Galium palustre (Common marsh bedstraw).